Consider the following 671-residue polypeptide: Synaptotagmin-like protein 4 (671 aa).

A RabBD domain is found at 4 to 122; it reads LLDLSFLSEE…KATGDWFYDQ (119 aa). The FYVE-type zinc-finger motif lies at 63-105; that stretch reads CARCQESLGRLSPKTNTCRGCNHLVCRDCRIQESNGTWRCKVC. The segment at 199–243 is disordered; that stretch reads SESLDSFTADSDSTSRRDSLDKSGLFPEWKKMSAPKSQVEKETQP. Residues Ser-201, Ser-204, Ser-217, Ser-221, Ser-274, and Ser-289 each carry the phosphoserine modification. Positions 356–478 constitute a C2 1 domain; it reads VTGRIAFSLK…KLDKKLDHCL (123 aa). Ser-488 carries the post-translational modification Phosphoserine. A C2 2 domain is found at 507–633; sequence PASKTPVGGD…ISNGEVVDWM (127 aa).

As to quaternary structure, part of a ternary complex containing STX1A and RAB27A. Can bind both dominant negative and dominant active mutants of RAB27A. Binds STXBP1, RAB3A, RAB8A and RAB27B. Interacts with MYO5A.

It is found in the membrane. Its subcellular location is the cell membrane. The protein localises to the cytoplasmic vesicle. It localises to the secretory vesicle membrane. Modulates exocytosis of dense-core granules and secretion of hormones in the pancreas and the pituitary. Interacts with vesicles containing negatively charged phospholipids in a Ca(2+)-independent manner. In Homo sapiens (Human), this protein is Synaptotagmin-like protein 4 (SYTL4).